The primary structure comprises 269 residues: 5'-nucleotidase SurE (269 aa).

A divalent metal cation contacts are provided by D8, D9, S40, and N95.

Belongs to the SurE nucleotidase family. The cofactor is a divalent metal cation.

It is found in the cytoplasm. The enzyme catalyses a ribonucleoside 5'-phosphate + H2O = a ribonucleoside + phosphate. In terms of biological role, nucleotidase that shows phosphatase activity on nucleoside 5'-monophosphates. The protein is 5'-nucleotidase SurE of Nitratidesulfovibrio vulgaris (strain DSM 19637 / Miyazaki F) (Desulfovibrio vulgaris).